A 644-amino-acid chain; its full sequence is Zinc finger protein 74 (644 aa).

The KRAB domain maps to Val43–Pro114. 12 C2H2-type zinc fingers span residues Phe248–His270, Tyr276–His298, Phe304–His326, Tyr332–His354, Tyr360–His382, Tyr388–His410, Phe416–His438, Phe444–His466, Phe472–His494, Phe500–His522, Tyr528–His550, and Phe556–His578. Lys582 is covalently cross-linked (Glycyl lysine isopeptide (Lys-Gly) (interchain with G-Cter in SUMO2)).

The protein belongs to the krueppel C2H2-type zinc-finger protein family. In terms of tissue distribution, highly expressed in the fetal brain.

Its subcellular location is the nucleus. Its function is as follows. May play a role in RNA metabolism. This is Zinc finger protein 74 (ZNF74) from Homo sapiens (Human).